A 340-amino-acid polypeptide reads, in one-letter code: Heat-inducible transcription repressor HrcA (340 aa).

Belongs to the HrcA family.

Negative regulator of class I heat shock genes (grpE-dnaK-dnaJ and groELS operons). Prevents heat-shock induction of these operons. The chain is Heat-inducible transcription repressor HrcA from Phytoplasma australiense.